The following is a 155-amino-acid chain: uncharacterized protein (155 aa).

This is an uncharacterized protein from Methanocaldococcus jannaschii (strain ATCC 43067 / DSM 2661 / JAL-1 / JCM 10045 / NBRC 100440) (Methanococcus jannaschii).